We begin with the raw amino-acid sequence, 182 residues long: Isopentenyl-diphosphate Delta-isomerase (182 aa).

Mn(2+)-binding residues include H25 and H32. A Nudix hydrolase domain is found at 30 to 164 (LLHLAFSSWL…PWAFSPWMVM (135 aa)). C67 is an active-site residue. H69 lines the Mn(2+) pocket. E87 serves as a coordination point for Mg(2+). Residues E114 and E116 each coordinate Mn(2+). Residue E116 is part of the active site.

The protein belongs to the IPP isomerase type 1 family. In terms of assembly, homodimer. Mg(2+) is required as a cofactor. It depends on Mn(2+) as a cofactor.

The protein resides in the cytoplasm. It catalyses the reaction isopentenyl diphosphate = dimethylallyl diphosphate. It participates in isoprenoid biosynthesis; dimethylallyl diphosphate biosynthesis; dimethylallyl diphosphate from isopentenyl diphosphate: step 1/1. Catalyzes the 1,3-allylic rearrangement of the homoallylic substrate isopentenyl (IPP) to its highly electrophilic allylic isomer, dimethylallyl diphosphate (DMAPP). This chain is Isopentenyl-diphosphate Delta-isomerase, found in Shigella flexneri serotype 5b (strain 8401).